We begin with the raw amino-acid sequence, 284 residues long: Pantothenate synthetase (284 aa).

32–39 (MGALHEGH) is an ATP binding site. The active-site Proton donor is His-39. Position 63 (Gln-63) interacts with (R)-pantoate. Residue Gln-63 coordinates beta-alanine. 149–152 (GEKD) is an ATP binding site. Residue Gln-155 coordinates (R)-pantoate. ATP is bound by residues Val-178 and 186–189 (LSSR).

This sequence belongs to the pantothenate synthetase family. Homodimer.

It localises to the cytoplasm. It carries out the reaction (R)-pantoate + beta-alanine + ATP = (R)-pantothenate + AMP + diphosphate + H(+). It functions in the pathway cofactor biosynthesis; (R)-pantothenate biosynthesis; (R)-pantothenate from (R)-pantoate and beta-alanine: step 1/1. Catalyzes the condensation of pantoate with beta-alanine in an ATP-dependent reaction via a pantoyl-adenylate intermediate. The sequence is that of Pantothenate synthetase from Chelativorans sp. (strain BNC1).